A 255-amino-acid polypeptide reads, in one-letter code: Fasciclin-like arabinogalactan protein 14 (255 aa).

An N-terminal signal peptide occupies residues 1–23; it reads MSSSLTIFFFFFASTFLYTSSNS. The 146-residue stretch at 24-169 folds into the FAS1 domain; that stretch reads FNITNILNEH…ISVLHISSAI (146 aa). 4 N-linked (GlcNAc...) asparagine glycosylation sites follow: N25, N99, N125, and N159. The tract at residues 179–231 is disordered; it reads PTASPLSPVSSPPRPAESPNDDGQDFDEPPSSAPGAAADEPSENAGSANGVSR. A compositionally biased stretch (acidic residues) spans 197-206; it reads PNDDGQDFDE. The span at 222–231 shows a compositional bias: polar residues; sequence NAGSANGVSR. S225 carries the GPI-anchor amidated serine lipid modification. Residues 226–255 constitute a propeptide, removed in mature form; it reads ANGVSRNDSQPAFAFTLLMSFIWWFMARLR.

This sequence belongs to the fasciclin-like AGP family.

It is found in the cell membrane. May be a cell surface adhesion protein. This is Fasciclin-like arabinogalactan protein 14 (FLA14) from Arabidopsis thaliana (Mouse-ear cress).